A 167-amino-acid polypeptide reads, in one-letter code: Photosystem II extrinsic protein V (167 aa).

The first 30 residues, 1 to 30 (MVFKTLRRTLWLTLAALLAVFQFNLGAAQA), serve as a signal peptide directing secretion. The heme c site is built by Cys67, Cys70, His71, and His122.

Belongs to the cytochrome c family. PsbV subfamily. PSII is composed of 1 copy each of membrane proteins PsbA, PsbB, PsbC, PsbD, PsbE, PsbF, PsbH, PsbI, PsbJ, PsbK, PsbL, PsbM, PsbT, PsbX, PsbY, PsbZ, Psb30/Ycf12, peripheral proteins PsbO, CyanoQ (PsbQ), PsbU, PsbV and a large number of cofactors. It forms dimeric complexes. It depends on heme c as a cofactor.

Its subcellular location is the cellular thylakoid membrane. In terms of biological role, one of the extrinsic, lumenal subunits of photosystem II (PSII). PSII is a light-driven water plastoquinone oxidoreductase, using light energy to abstract electrons from H(2)O, generating a proton gradient subsequently used for ATP formation. The extrinsic proteins stabilize the structure of photosystem II oxygen-evolving complex (OEC), the ion environment of oxygen evolution and protect the OEC against heat-induced inactivation. Low-potential cytochrome c that plays a role in the OEC of PSII. In Synechococcus elongatus (strain ATCC 33912 / PCC 7942 / FACHB-805) (Anacystis nidulans R2), this protein is Photosystem II extrinsic protein V.